Here is a 556-residue protein sequence, read N- to C-terminus: Neurofilament light polypeptide (556 aa).

Ser2 carries the post-translational modification N-acetylserine. The interval 2 to 94 (SSYGYDPFFP…KSIRSQERAQ (93 aa)) is head. An IF rod domain is found at 91–402 (ERAQLQDLND…KLLEGEETRL (312 aa)). Positions 95-126 (LQDLNDRFACFIERVHELEQQNKVLEAELLVL) are coil 1A. The linker 1 stretch occupies residues 127-139 (RQKHAEPSRFRAL). Positions 140 to 235 (YEQEIRELRL…KVHEEELAEL (96 aa)) are coil 1B. Positions 236-254 (QAQIQYAHLSVEMDVSAKP) are linker 12. The interval 255–273 (DLSAALRDIRAQYEKLAAR) is coil 2A. Positions 274-282 (NMQNAEEWF) are linker 2. Residues 283 to 398 (RSRFTVLSES…AAYRKLLEGE (116 aa)) are coil 2B. The segment at 399–445 (ETRLSFTSVGSITSGYTQTAPTFGRSAYSGLQSTSYLMTTRSFPTYY) is tail, subdomain A. Residues 399–556 (ETRLSFTSVG…KEETEVKKKA (158 aa)) are tail. Residues 446–556 (SSHVQEEQIE…KEETEVKKKA (111 aa)) are tail, subdomain B (acidic). The segment covering 464-473 (KAGEAKAAPA) has biased composition (low complexity). Residues 464-556 (KAGEAKAAPA…KEETEVKKKA (93 aa)) form a disordered region. The span at 474–540 (EEGEEEEKEE…AEETGEEEKE (67 aa)) shows a compositional bias: acidic residues. Basic and acidic residues predominate over residues 541 to 556 (EKEAAGKEETEVKKKA).

It belongs to the intermediate filament family. Forms homodimers (in vitro).

The protein localises to the cell projection. It is found in the axon. The protein resides in the cytoplasm. Its subcellular location is the cytoskeleton. Functionally, neurofilaments usually contain three intermediate filament proteins: NEFL, NEFM, and NEFH which are involved in the maintenance of neuronal caliber. May additionally cooperate with the neuronal intermediate filament proteins to form neuronal filamentous networks. This is Neurofilament light polypeptide (NEFL) from Coturnix japonica (Japanese quail).